The chain runs to 1259 residues: Lysine-specific demethylase 2B (1259 aa).

In terms of domain architecture, JmjC spans 147-315; it reads FSHTKLERVV…MQLRVFEIED (169 aa). Threonine 208 contacts substrate. The Fe cation site is built by histidine 211 and aspartate 213. A substrate-binding site is contributed by lysine 228. Histidine 283 contributes to the Fe cation binding site. Residues 388–402 show a composition bias toward basic and acidic residues; the sequence is EEKGNLVEKPSKQSG. Disordered stretches follow at residues 388 to 463 and 536 to 562; these read EEKG…ATDM and KPSK…SANR. The span at 403–413 shows a compositional bias: polar residues; it reads DESSTTNSTHS. Residues 414-423 show a composition bias toward basic and acidic residues; that stretch reads NGKDAAEKKQ. A compositionally biased stretch (polar residues) spans 426-437; sequence TLMQQLKRTLSN. The segment covering 536-548 has biased composition (basic residues); sequence KPSKNRAVGRPKG. The segment at 567–613 adopts a CXXC-type zinc-finger fold; that stretch reads ARRRRTRCRKCEACLRTECGECHFCKDMKKFGGPGRMKQSCIMRQCI. Residues cysteine 574, cysteine 577, cysteine 580, cysteine 585, cysteine 588, cysteine 591, cysteine 607, cysteine 612, cysteine 623, cysteine 626, cysteine 649, cysteine 652, histidine 657, cysteine 660, cysteine 680, and cysteine 683 each contribute to the Zn(2+) site. A PHD-type zinc finger spans residues 620–686; the sequence is TAVCLVCGEA…CWECPKCNHA (67 aa). Composition is skewed to basic and acidic residues over residues 729–763 and 771–790; these read KKKV…EDGH and EKPP…EEKL. The tract at residues 729 to 958 is disordered; it reads KKKVEREETP…PPPSLSPPKC (230 aa). Residues 835–848 are compositionally biased toward polar residues; that stretch reads SRSSSPTAGPSTEG. The segment covering 854–863 has biased composition (basic residues); the sequence is KKKIRRKRRV. Over residues 864–877 the composition is skewed to basic and acidic residues; that stretch reads SNKELSKELSKELN. Positions 864–891 form a coiled coil; the sequence is SNKELSKELSKELNQEIQKTESSLASEN. A compositionally biased stretch (polar residues) spans 878–889; the sequence is QEIQKTESSLAS. Residues 890-908 show a composition bias toward basic and acidic residues; it reads ENHHPIKSEPESDNEESKK. The F-box domain maps to 985–1030; that stretch reads AHVMQREVWMAIFSYLSHRDLCICMRICRTWNRWCCDKRLWTQIDL. LRR repeat units follow at residues 1056 to 1081, 1082 to 1105, 1145 to 1170, 1171 to 1200, and 1201 to 1225; these read WTNI…NLSG, CSWI…NVQW, GLDI…DLSY, CNHV…NLSD, and CNNV…DLRF.

This sequence belongs to the JHDM1 histone demethylase family. It depends on Fe(2+) as a cofactor.

It is found in the nucleus. The protein localises to the nucleolus. It localises to the chromosome. The catalysed reaction is N(6),N(6)-dimethyl-L-lysyl(36)-[histone H3] + 2 2-oxoglutarate + 2 O2 = L-lysyl(36)-[histone H3] + 2 formaldehyde + 2 succinate + 2 CO2. Its activity is regulated as follows. Histone demethylase activity is inhibited by fumarate. Its function is as follows. Histone demethylase that demethylates 'Lys-4' and 'Lys-36' of histone H3, thereby playing a central role in histone code. Preferentially demethylates trimethylated H3 'Lys-4' and dimethylated H3 'Lys-36' residue while it has weak or no activity for mono- and tri-methylated H3 'Lys-36'. Preferentially binds the transcribed region of ribosomal RNA and represses the transcription of ribosomal RNA genes which inhibits cell growth and proliferation. In Xenopus laevis (African clawed frog), this protein is Lysine-specific demethylase 2B (kdm2b).